Consider the following 750-residue polypeptide: Photosystem I P700 chlorophyll a apoprotein A1 (750 aa).

8 helical membrane passes run 70 to 93 (VFSA…FHGA), 156 to 179 (LYCT…FHYH), 195 to 219 (LNHH…HVSL), 291 to 309 (IAHH…GHMY), 346 to 369 (WHAQ…HHMY), 385 to 411 (LSLF…IFMV), 433 to 455 (AIIS…LYIH), and 531 to 549 (FLVH…LILL). Residues C573 and C582 each coordinate [4Fe-4S] cluster. 2 helical membrane passes run 589-610 (HVFL…HFSW) and 664-686 (LSAY…MFLF). A chlorophyll a'-binding site is contributed by H675. Chlorophyll a is bound by residues M683 and Y691. W692 serves as a coordination point for phylloquinone. A helical transmembrane segment spans residues 724–744 (TVGVTHYLLGGIATTWAFFLA).

It belongs to the PsaA/PsaB family. The PsaA/B heterodimer binds the P700 chlorophyll special pair and subsequent electron acceptors. PSI consists of a core antenna complex that captures photons, and an electron transfer chain that converts photonic excitation into a charge separation. The eukaryotic PSI reaction center is composed of at least 11 subunits. Requires P700 is a chlorophyll a/chlorophyll a' dimer, A0 is one or more chlorophyll a, A1 is one or both phylloquinones and FX is a shared 4Fe-4S iron-sulfur center. as cofactor.

Its subcellular location is the plastid. The protein localises to the chloroplast thylakoid membrane. The catalysed reaction is reduced [plastocyanin] + hnu + oxidized [2Fe-2S]-[ferredoxin] = oxidized [plastocyanin] + reduced [2Fe-2S]-[ferredoxin]. In terms of biological role, psaA and PsaB bind P700, the primary electron donor of photosystem I (PSI), as well as the electron acceptors A0, A1 and FX. PSI is a plastocyanin-ferredoxin oxidoreductase, converting photonic excitation into a charge separation, which transfers an electron from the donor P700 chlorophyll pair to the spectroscopically characterized acceptors A0, A1, FX, FA and FB in turn. Oxidized P700 is reduced on the lumenal side of the thylakoid membrane by plastocyanin. The protein is Photosystem I P700 chlorophyll a apoprotein A1 of Oenothera elata subsp. hookeri (Hooker's evening primrose).